The primary structure comprises 524 residues: MILPFLVLAIGTCLTNSFVPEKEKDPSYWRQQAQETLKNALKLQKLNTNVAKNIIMFLGDGMGVSTVTAARILKGQLHHNTGEETRLEMDKFPFVALSKTYNTNAQVPDSAGTATAYLCGVKANEGTVGVSAATERTRCNTTQGNEVTSILRWAKDAGKSVGIVTTTRVNHATPSAAYAHSADRDWYSDNEMPPEALSQGCKDIAYQLMHNIKDIDVIMGGGRKYMYPKNRTDVEYELDEKARGTRLDGLDLISIWKSFKPRHKHSHYVWNRTELLALDPSRVDYLLGLFEPGDMQYELNRNNLTDPSLSEMVEVALRILTKNPKGFFLLVEGGRIDHGHHEGKAKQALHEAVEMDEAIGKAGTMTSQKDTLTVVTADHSHVFTFGGYTPRGNSIFGLAPMVSDTDKKPFTAILYGNGPGYKVVDGERENVSMVDYAHNNYQAQSAVPLRHETHGGEDVAVFAKGPMAHLLHGVHEQNYIPHVMAYASCIGANLDHCAWASSASSPSPGALLLPLALFPLRTLF.

A signal peptide spans 1 to 17 (MILPFLVLAIGTCLTNS). Asp60 is a Mg(2+) binding site. Residues Asp60 and Ser110 each contribute to the Zn(2+) site. Ser110 acts as the Phosphoserine intermediate in catalysis. Residue Ser110 is modified to Phosphoserine. Cys139 and Cys201 are joined by a disulfide. An N-linked (GlcNAc...) asparagine glycan is attached at Asn140. Thr173 provides a ligand contact to Mg(2+). Asn230 carries an N-linked (GlcNAc...) asparagine glycan. Glu235 contacts Ca(2+). N-linked (GlcNAc...) asparagine glycosylation occurs at Asn271. Phe290 and Glu291 together coordinate Ca(2+). N-linked (GlcNAc...) asparagine glycosylation occurs at Asn303. Asp306 contributes to the Ca(2+) binding site. Glu332 lines the Mg(2+) pocket. The Zn(2+) site is built by Asp337, His341, Asp378, and His379. The N-linked (GlcNAc...) asparagine glycan is linked to Asn430. Position 454 (His454) interacts with Zn(2+). Cysteines 489 and 497 form a disulfide. Residue Ser501 is the site of GPI-anchor amidated serine attachment. Residues 502–524 (SASSPSPGALLLPLALFPLRTLF) constitute a propeptide, removed in mature form.

Belongs to the alkaline phosphatase family. In terms of assembly, homodimer. Requires Mg(2+) as cofactor. Zn(2+) is required as a cofactor. It depends on Ca(2+) as a cofactor. Post-translationally, N-glycosylated.

It is found in the cell membrane. The protein resides in the extracellular vesicle membrane. The protein localises to the mitochondrion membrane. It localises to the mitochondrion intermembrane space. The catalysed reaction is a phosphate monoester + H2O = an alcohol + phosphate. It carries out the reaction diphosphate + H2O = 2 phosphate + H(+). It catalyses the reaction pyridoxal 5'-phosphate + H2O = pyridoxal + phosphate. The enzyme catalyses phosphoethanolamine + H2O = ethanolamine + phosphate. The catalysed reaction is N-phosphocreatine + H2O = creatine + phosphate. It carries out the reaction ATP + H2O = ADP + phosphate + H(+). It catalyses the reaction ADP + H2O = AMP + phosphate + H(+). The enzyme catalyses AMP + H2O = adenosine + phosphate. With respect to regulation, phosphatase activity is specifically inhibited by 5-((5-chloro-2-methoxyphenyl)sulfonamido)nicotinamide (SBI-425). In terms of biological role, alkaline phosphatase that metabolizes various phosphate compounds and plays a key role in skeletal mineralization and adaptive thermogenesis. Has broad substrate specificity and can hydrolyze a considerable variety of compounds: however, only a few substrates, such as diphosphate (inorganic pyrophosphate; PPi), pyridoxal 5'-phosphate (PLP) and N-phosphocreatine are natural substrates. Plays an essential role in skeletal and dental mineralization via its ability to hydrolyze extracellular diphosphate, a potent mineralization inhibitor, to phosphate: it thereby promotes hydroxyapatite crystal formation and increases inorganic phosphate concentration. Acts in a non-redundant manner with PHOSPHO1 in skeletal mineralization: while PHOSPHO1 mediates the initiation of hydroxyapatite crystallization in the matrix vesicles (MVs), ALPL/TNAP catalyzes the spread of hydroxyapatite crystallization in the extracellular matrix. Also promotes dephosphorylation of osteopontin (SSP1), an inhibitor of hydroxyapatite crystallization in its phosphorylated state; it is however unclear whether ALPL/TNAP mediates SSP1 dephosphorylation via a direct or indirect manner. Catalyzes dephosphorylation of PLP to pyridoxal (PL), the transportable form of vitamin B6, in order to provide a sufficient amount of PLP in the brain, an essential cofactor for enzymes catalyzing the synthesis of diverse neurotransmitters. Additionally, also able to mediate ATP degradation in a stepwise manner to adenosine, thereby regulating the availability of ligands for purinergic receptors. Also capable of dephosphorylating microbial products, such as lipopolysaccharides (LPS) as well as other phosphorylated small-molecules, such as poly-inosine:cytosine (poly I:C). Acts as a key regulator of adaptive thermogenesis as part of the futile creatine cycle: localizes to the mitochondria of thermogenic fat cells and acts by mediating hydrolysis of N-phosphocreatine to initiate a futile cycle of creatine dephosphorylation and phosphorylation. During the futile creatine cycle, creatine and N-phosphocreatine are in a futile cycle, which dissipates the high energy charge of N-phosphocreatine as heat without performing any mechanical or chemical work. This chain is Alkaline phosphatase, tissue-nonspecific isozyme (Alpl), found in Rattus norvegicus (Rat).